The following is a 365-amino-acid chain: Phospho-N-acetylmuramoyl-pentapeptide-transferase (365 aa).

The next 10 membrane-spanning stretches (helical) occupy residues 22 to 42 (YVSVRIIMISITSLLITLFLG), 74 to 94 (TMGGVLILSSVIISALLWGSL), 95 to 115 (SSIYLWILILVVIFFGAIGFF), 134 to 154 (KFALQSIFSIILAIVLFYLLS), 169 to 189 (LHIPMGIFLFVVLTFFIINGS), 201 to 221 (GLAIVPVVLVAAGLGIYAYIQ), 240 to 260 (LAEVAVFCAALCGSGLAFLWF), 268 to 288 (FMGDVGSLTLGAVLGVIAVMI), 292 to 312 (LIFFIMGLLFVVEALSVMLQV), and 342 to 362 (KVVIRFWIVSLILFLIGLVAI).

It belongs to the glycosyltransferase 4 family. MraY subfamily. The cofactor is Mg(2+).

It is found in the cell inner membrane. It carries out the reaction UDP-N-acetyl-alpha-D-muramoyl-L-alanyl-gamma-D-glutamyl-meso-2,6-diaminopimeloyl-D-alanyl-D-alanine + di-trans,octa-cis-undecaprenyl phosphate = di-trans,octa-cis-undecaprenyl diphospho-N-acetyl-alpha-D-muramoyl-L-alanyl-D-glutamyl-meso-2,6-diaminopimeloyl-D-alanyl-D-alanine + UMP. It participates in cell wall biogenesis; peptidoglycan biosynthesis. Catalyzes the initial step of the lipid cycle reactions in the biosynthesis of the cell wall peptidoglycan: transfers peptidoglycan precursor phospho-MurNAc-pentapeptide from UDP-MurNAc-pentapeptide onto the lipid carrier undecaprenyl phosphate, yielding undecaprenyl-pyrophosphoryl-MurNAc-pentapeptide, known as lipid I. The sequence is that of Phospho-N-acetylmuramoyl-pentapeptide-transferase from Francisella philomiragia subsp. philomiragia (strain ATCC 25017 / CCUG 19701 / FSC 153 / O#319-036).